The chain runs to 159 residues: Thymic stromal lymphopoietin (159 aa).

The N-terminal stretch at 1 to 28 (MFPFALLYVLSVSFRKIFILQLVGLVLT) is a signal peptide. Cystine bridges form between C34–C110, C69–C75, and C90–C137. An N-linked (GlcNAc...) asparagine glycan is attached at N64. Residue N119 is glycosylated (N-linked (GlcNAc...) asparagine).

As to quaternary structure, interacts with a receptor composed of CRLF2 and IL7R. Binding of TSLP to CRLF2/TSLPR is a mechanistic prerequisite for recruitment of IL7R to the high-affinity ternary complex. As to expression, isoform 1 is expressed in a number of tissues including heart, liver and prostate. Isoform 2 is the predominant form in keratinocytes of oral mucosa, skin and in salivary glands. It is secreted into saliva.

The protein localises to the secreted. Functionally, cytokine that induces the release of T-cell-attracting chemokines from monocytes and, in particular, enhances the maturation of CD11c(+) dendritic cells. Can induce allergic inflammation by directly activating mast cells. May act as an antimicrobial peptide in the oral cavity and on the skin. The chain is Thymic stromal lymphopoietin (TSLP) from Homo sapiens (Human).